The following is a 446-amino-acid chain: NADH-dependent phenylglyoxylate dehydrogenase subunit beta (446 aa).

4Fe-4S ferredoxin-type domains are found at residues 6-35, 49-80, 82-111, and 109-141; these read STIA…TDDI, ADKT…KDGT, GVIG…LDEA, and DEAT…HITT.

As to quaternary structure, dimer of heteropentamers composed of an alpha (PadG), a beta (PadI), a gamma (PadE), a delta (PadF) and an epsilon (PadH) subunit. It depends on [4Fe-4S] cluster as a cofactor.

It catalyses the reaction phenylglyoxylate + NAD(+) + CoA = benzoyl-CoA + CO2 + NADH. Its activity is regulated as follows. Activated by magnesium ions and thiamine diphosphate. Involved in the anaerobic metabolism of phenylalanine and phenylacetate. Catalyzes the oxidative decarboxylation of phenylglyoxylate to benzoyl-CoA and CO(2). It can also react slowly with 2-oxo-3-methylbutanoate and use different electron acceptors such as benzyl viologen, methyl viologen, FAD or FMN, but NAD seems to be the physiological electron acceptor. Also catalyzes an isotope exchange between CO(2) and the carboxyl group which proves partial or complete reversibility of the oxidative decarboxylation reaction. This chain is NADH-dependent phenylglyoxylate dehydrogenase subunit beta (padI), found in Aromatoleum evansii (Azoarcus evansii).